Here is an 85-residue protein sequence, read N- to C-terminus: Large ribosomal subunit protein bL27 (85 aa).

Residues 1 to 22 (MAKTKAGGSTRNGRDSKGRRLG) form a disordered region.

The protein belongs to the bacterial ribosomal protein bL27 family.

The sequence is that of Large ribosomal subunit protein bL27 from Mycoplasmopsis pulmonis (strain UAB CTIP) (Mycoplasma pulmonis).